The chain runs to 725 residues: Peroxisomal fatty acid beta-oxidation multifunctional protein MFP2 (725 aa).

The active-site Nucleophile is the glutamate 119. The active-site Proton acceptor is the glutamate 139. A Microbody targeting signal motif is present at residues 723-725; that stretch reads SRL.

This sequence in the N-terminal section; belongs to the enoyl-CoA hydratase/isomerase family. In the central section; belongs to the 3-hydroxyacyl-CoA dehydrogenase family. As to expression, highly expressed in senescing leaves and at lower levels in flowers and siliques.

The protein localises to the glyoxysome. Its subcellular location is the peroxisome. The enzyme catalyses a (3S)-3-hydroxyacyl-CoA = a (2E)-enoyl-CoA + H2O. It catalyses the reaction a 4-saturated-(3S)-3-hydroxyacyl-CoA = a (3E)-enoyl-CoA + H2O. It carries out the reaction (3S)-3-hydroxybutanoyl-CoA = (2E)-butenoyl-CoA + H2O. The catalysed reaction is (3S)-hydroxyoctanoyl-CoA = (2E)-octenoyl-CoA + H2O. The enzyme catalyses (3S)-3-hydroxydodecanoyl-CoA = (2E)-dodecenoyl-CoA + H2O. It catalyses the reaction (3S)-hydroxytetradecanoyl-CoA = (2E)-tetradecenoyl-CoA + H2O. It carries out the reaction (3S)-hydroxyhexanoyl-CoA = (2E)-hexenoyl-CoA + H2O. The catalysed reaction is a (3Z)-enoyl-CoA = a 4-saturated (2E)-enoyl-CoA. The enzyme catalyses a (3E)-enoyl-CoA = a 4-saturated (2E)-enoyl-CoA. It catalyses the reaction (3S)-3-hydroxybutanoyl-CoA = (3R)-3-hydroxybutanoyl-CoA. It carries out the reaction a (3S)-3-hydroxyacyl-CoA + NAD(+) = a 3-oxoacyl-CoA + NADH + H(+). The catalysed reaction is (3S)-3-hydroxybutanoyl-CoA + NAD(+) = acetoacetyl-CoA + NADH + H(+). The enzyme catalyses (3S)-hydroxyhexanoyl-CoA + NAD(+) = 3-oxohexanoyl-CoA + NADH + H(+). It catalyses the reaction (3S)-hydroxyoctanoyl-CoA + NAD(+) = 3-oxooctanoyl-CoA + NADH + H(+). It carries out the reaction (3S)-3-hydroxydodecanoyl-CoA + NAD(+) = 3-oxododecanoyl-CoA + NADH + H(+). The catalysed reaction is (3S)-hydroxytetradecanoyl-CoA + NAD(+) = 3-oxotetradecanoyl-CoA + NADH + H(+). Its pathway is lipid metabolism; fatty acid beta-oxidation. In terms of biological role, involved in peroxisomal fatty acid beta-oxidation during seed germination. Possesses enoyl-CoA hydratase activity against long chain substrates (C14-C18) and 3-hydroxyacyl-CoA dehydrogenase activity against chains of variable sizes (C6-C18). Possesses 3-hydroxy-3-phenylpropionyl-CoA dehydrogenase activity and is involved in the peroxisomal beta-oxidation pathway for the biosynthesis of benzoic acid (BA). Required for the accumulation in seeds of substituted hydroxybenzoylated choline esters, which are BA-containing secondary metabolites. Fatty acid beta-oxidation pathway in peroxisomes regulates gene silencing, histone acetylation and DNA methylation. The polypeptide is Peroxisomal fatty acid beta-oxidation multifunctional protein MFP2 (Arabidopsis thaliana (Mouse-ear cress)).